The sequence spans 1075 residues: Atos homolog protein A (1075 aa).

The transactivation domain 1 (TAD1) stretch occupies residues 24 to 32 (ALLITEGRT). 3 disordered regions span residues 430–469 (FGSP…RQPA), 570–592 (YSPQ…PDSI), and 703–766 (LNKN…PHSV). Basic and acidic residues predominate over residues 440–454 (DSREGKVREKSETRP). The span at 703–712 (LNKNKTNCSS) shows a compositional bias: polar residues. Over residues 746 to 759 (DRLKTEQEAKRDSG) the composition is skewed to basic and acidic residues. The required for macropage invasion stretch occupies residues 878 to 935 (LLGNFEESVLNYRLDPLGIVDGFTAEVGASGTFCPTHLTLPVEVSFYSVSDDNAPSPY). The segment at 962–970 (FNPNKTVVK) is transactivation domain 2 (TAD2).

The protein belongs to the ATOS family.

Its subcellular location is the nucleus. Functionally, transcription regulator that syncronizes transcriptional and translational programs to promote macrophage invasion of tissues. This Mus musculus (Mouse) protein is Atos homolog protein A (Atosa).